The primary structure comprises 880 residues: Dynamin-like protein A (880 aa).

The disordered stretch occupies residues 1-124 (MSVFKKKDKS…QVELERKRRD (124 aa)). The span at 8 to 20 (DKSDDKKKKHDEE) shows a compositional bias: basic and acidic residues. Over residues 22 to 31 (PQGTFQPASQ) the composition is skewed to polar residues. The span at 32 to 68 (STSNTNLNSLASSVNNGASVGSTNGSTPNNSNGSTPT) shows a compositional bias: low complexity. A coiled-coil region spans residues 69–152 (YNHNNSAEEL…NEQVEISSLE (84 aa)). 2 stretches are compositionally biased toward basic and acidic residues: residues 77-94 (ELEK…KSEL) and 103-124 (KKKE…KRRD). One can recognise a Dynamin-type G domain in the interval 191-478 (AVSHPEIVFV…VWKSYQDTIP (288 aa)). The interval 201-208 (GPRSSGKS) is G1 motif. GTP is bound at residue 201–208 (GPRSSGKS). Residues 227–240 (IVGVGGSNANGCSK) are G2 motif. Residues 315-318 (DSPG) form a G3 motif region. Residues 315–319 (DSPGL) and 380–383 (TKFH) each bind GTP. The interval 380–383 (TKFH) is G4 motif. The tract at residues 413–416 (LPNH) is G5 motif. Residues 479–509 (RILKHLRSKRQTAEATLNELQKQSSSLDSTK) are a coiled coil. The segment covering 532–543 (TSEGNPSANGQT) has biased composition (polar residues). Residues 532-551 (TSEGNPSANGQTLDEEKSQQ) form a disordered region. Positions 824–861 (SNEQLEQLFEVQATREQLKQEEKKQQQILEKYSQIDEQ) form a coiled coil.

Belongs to the TRAFAC class dynamin-like GTPase superfamily. Dynamin/Fzo/YdjA family.

The protein resides in the cytoplasm. Its subcellular location is the cleavage furrow. The catalysed reaction is GTP + H2O = GDP + phosphate + H(+). Involved in cytokinesis. May hydrolyze GTP. This chain is Dynamin-like protein A (dlpA), found in Dictyostelium discoideum (Social amoeba).